A 602-amino-acid chain; its full sequence is Elongation factor 4 (602 aa).

In terms of domain architecture, tr-type G spans 5–187 (DHIRNFAIIA…QIIVSLPAPE (183 aa)). GTP contacts are provided by residues 17-22 (DHGKST) and 134-137 (NKVD).

This sequence belongs to the TRAFAC class translation factor GTPase superfamily. Classic translation factor GTPase family. LepA subfamily.

The protein localises to the cell inner membrane. The catalysed reaction is GTP + H2O = GDP + phosphate + H(+). In terms of biological role, required for accurate and efficient protein synthesis under certain stress conditions. May act as a fidelity factor of the translation reaction, by catalyzing a one-codon backward translocation of tRNAs on improperly translocated ribosomes. Back-translocation proceeds from a post-translocation (POST) complex to a pre-translocation (PRE) complex, thus giving elongation factor G a second chance to translocate the tRNAs correctly. Binds to ribosomes in a GTP-dependent manner. This is Elongation factor 4 from Pelagibacter ubique (strain HTCC1062).